Here is a 73-residue protein sequence, read N- to C-terminus: Disintegrin barbourin (73 aa).

One can recognise a Disintegrin domain in the interval 1-73 (EAGEECDCGS…ADCPRNGLYG (73 aa)). Cystine bridges form between Cys6–Cys21, Cys8–Cys16, Cys15–Cys38, Cys29–Cys35, Cys34–Cys59, and Cys47–Cys66. Residues 51–53 (KGD) carry the Cell attachment site; atypical (KGD) motif.

It belongs to the venom metalloproteinase (M12B) family. P-II subfamily. P-IIa sub-subfamily. As to quaternary structure, monomer. As to expression, expressed by the venom gland.

The protein resides in the secreted. Its function is as follows. Inhibitor of ligand binding to the integrins alpha-IIb/beta-3 (ITGA2B/ITGB3). Competition with fibrinogen for the RGD recognition sites on the alpha-IIb/beta-3 integrin results in the inhibition of platelet aggregation induced by ADP, thrombin, platelet-activating factor and collagen. The protein is Disintegrin barbourin of Sistrurus miliarius barbouri (Dusky pigmy rattlesnake).